We begin with the raw amino-acid sequence, 332 residues long: Multiple virulence factor regulator MvfR (332 aa).

One can recognise an HTH lysR-type domain in the interval 4–61 (HNLNHVNMFLQVIASGSISSAARILRKSHTAVSSAVSNLEIDLCVELVRRDGYKVEPT). Positions 21 to 40 (ISSAARILRKSHTAVSSAVS) form a DNA-binding region, H-T-H motif.

It belongs to the LysR transcriptional regulatory family. As to quaternary structure, forms homooligomers.

It is found in the cell inner membrane. The protein resides in the secreted. With respect to regulation, both 3,4-dihydroxy-2-heptylquinoline (PQS) and its precursor 4-hydroxy-2-heptylquinoline (HHQ) function as ligands and promote MvfR DNA-binding activity leading to transcriptional activation. Its function is as follows. Transcription regulator that plays a critical role in virulence by positively regulating the expression of multiple quorum sensing (QS)-regulated virulence factors, genes involved in protein secretion, translation, response to oxidative stress and the phnAB operon. At the stationary phase, negatively autoregulates its function through cleavage and translocation to the extracellular space. This Pseudomonas aeruginosa (strain ATCC 15692 / DSM 22644 / CIP 104116 / JCM 14847 / LMG 12228 / 1C / PRS 101 / PAO1) protein is Multiple virulence factor regulator MvfR.